A 201-amino-acid chain; its full sequence is Large ribosomal subunit protein uL4 (201 aa).

Positions 45–71 (AQKTRAEVTGSGKKPWRQKGTGRARAG) are disordered.

It belongs to the universal ribosomal protein uL4 family. Part of the 50S ribosomal subunit.

Its function is as follows. One of the primary rRNA binding proteins, this protein initially binds near the 5'-end of the 23S rRNA. It is important during the early stages of 50S assembly. It makes multiple contacts with different domains of the 23S rRNA in the assembled 50S subunit and ribosome. Forms part of the polypeptide exit tunnel. The polypeptide is Large ribosomal subunit protein uL4 (Shewanella halifaxensis (strain HAW-EB4)).